Consider the following 98-residue polypeptide: NADH-ubiquinone oxidoreductase chain 4L (98 aa).

Helical transmembrane passes span 1-21, 30-50, and 61-81; these read MSMVYINIFLAFILSFMGLLI, LLCLEGMMLSLFIMMTVTILT, and IILLVFAACEAALGLSLLVMI.

It belongs to the complex I subunit 4L family. In terms of assembly, core subunit of respiratory chain NADH dehydrogenase (Complex I) which is composed of 45 different subunits.

Its subcellular location is the mitochondrion inner membrane. It catalyses the reaction a ubiquinone + NADH + 5 H(+)(in) = a ubiquinol + NAD(+) + 4 H(+)(out). In terms of biological role, core subunit of the mitochondrial membrane respiratory chain NADH dehydrogenase (Complex I) which catalyzes electron transfer from NADH through the respiratory chain, using ubiquinone as an electron acceptor. Part of the enzyme membrane arm which is embedded in the lipid bilayer and involved in proton translocation. In Martes americana (American marten), this protein is NADH-ubiquinone oxidoreductase chain 4L (MT-ND4L).